Consider the following 280-residue polypeptide: Retinoschisin (280 aa).

Residues 1–23 form the signal peptide; that stretch reads MHLPREAFLLALAGAFIFPSSQQ. The F5/8 type C domain maps to 119 to 275; the sequence is CPYHRPLGFE…IALRLELLLC (157 aa). Disulfide bonds link cysteine 119–cysteine 275 and cysteine 166–cysteine 198.

In terms of assembly, homooctamer of 4 homodimers; disulfide-linked. The homooctamer has a flat, cogwheel structure with a diameter of about 14 nm. Two stacked octamers can assemble to form a hexadecamer.

Its subcellular location is the secreted. It is found in the cell membrane. In terms of biological role, binds negatively charged membrane lipids, such as phosphatidylserine and phosphoinositides. May play a role in cell-cell adhesion processes in the retina, via homomeric interaction between octamers present on the surface of two neighboring cells. Required for normal structure and function of the retina. The protein is Retinoschisin (xlrs1) of Takifugu rubripes (Japanese pufferfish).